A 106-amino-acid polypeptide reads, in one-letter code: Thiosulfate sulfurtransferase GlpE (106 aa).

A Rhodanese domain is found at 17 to 105 (EQNEARLVDI…SYRAELPVIA (89 aa)). Cysteine 65 functions as the Cysteine persulfide intermediate in the catalytic mechanism.

Belongs to the GlpE family.

The protein resides in the cytoplasm. It catalyses the reaction thiosulfate + hydrogen cyanide = thiocyanate + sulfite + 2 H(+). It carries out the reaction thiosulfate + [thioredoxin]-dithiol = [thioredoxin]-disulfide + hydrogen sulfide + sulfite + 2 H(+). In terms of biological role, transferase that catalyzes the transfer of sulfur from thiosulfate to thiophilic acceptors such as cyanide or dithiols. May function in a CysM-independent thiosulfate assimilation pathway by catalyzing the conversion of thiosulfate to sulfite, which can then be used for L-cysteine biosynthesis. The polypeptide is Thiosulfate sulfurtransferase GlpE (Vibrio atlanticus (strain LGP32) (Vibrio splendidus (strain Mel32))).